Consider the following 691-residue polypeptide: Beta-galactosidase III (691 aa).

Substrate contacts are provided by Arg121 and Asn159. Glu160 (proton donor) is an active-site residue. Residue Glu318 is the Nucleophile of the active site. Substrate-binding positions include Trp326 and Glu366 to His369.

It belongs to the glycosyl hydrolase 42 family.

The catalysed reaction is Hydrolysis of terminal non-reducing beta-D-galactose residues in beta-D-galactosides.. In terms of biological role, specific for beta-D-anomer-linked galactoside substrates. Hydrolyzes o-nitrophenyl-beta-D-galactopyranoside (ONPG), chromogen 5-bromo-4-chloro-3-indolyl-beta-D-galactopyranoside (X-gal) and to a lesser extent lactose. Hydrolyzes p-nitrophenyl-beta-D-galacturonide very slightly. Does not hydrolyze maltose, sucrose, raffinose or melibiose. Has some transgalactosylation activity yielding galacto-oligosaccharides (GaOS), including O-beta-D-galactopyranosyl-(1,3)-O-beta-D-galactopyranosyl-(1-4)-D-glucopyranose. The protein is Beta-galactosidase III of Bifidobacterium longum subsp. infantis.